The following is a 121-amino-acid chain: Large ribosomal subunit protein bL20 (121 aa).

Belongs to the bacterial ribosomal protein bL20 family.

Binds directly to 23S ribosomal RNA and is necessary for the in vitro assembly process of the 50S ribosomal subunit. It is not involved in the protein synthesizing functions of that subunit. The protein is Large ribosomal subunit protein bL20 of Beijerinckia indica subsp. indica (strain ATCC 9039 / DSM 1715 / NCIMB 8712).